A 401-amino-acid chain; its full sequence is Dynactin subunit 2 (401 aa).

The tract at residues 1 to 25 (MADPKYADLPGIARNEPDVYETSDL) is disordered. N-acetylalanine is present on A2. The residue at position 6 (Y6) is a Phosphotyrosine. The residue at position 83 (S83) is a Phosphoserine. Position 86 is a phosphotyrosine (Y86). Residues 99–132 (PQQKYQRLLHEVQELTTEVEKIKTTVKESATEEK) are a coiled coil. Phosphothreonine occurs at positions 134 and 198. A coiled-coil region spans residues 214–244 (EQDKFSQAAKVAELEKRLTELETAVRCDQDA). S320 bears the Phosphoserine mark. The stretch at 379–399 (RENLATVEGNFASIDERMKKL) forms a coiled coil.

This sequence belongs to the dynactin subunit 2 family. In terms of assembly, subunit of dynactin, a multiprotein complex part of a tripartite complex with dynein and a adapter, such as BICDL1, BICD2 or HOOK3. The dynactin complex is built around ACTR1A/ACTB filament and consists of an actin-related filament composed of a shoulder domain, a pointed end and a barbed end. Its length is defined by its flexible shoulder domain. The soulder is composed of 2 DCTN1 subunits, 4 DCTN2 and 2 DCTN3. The 4 DCNT2 (via N-terminus) bind the ACTR1A filament and act as molecular rulers to determine the length. The pointed end is important for binding dynein-dynactin cargo adapters and consists of 4 subunits: ACTR10, DCNT4, DCTN5 and DCTN6. The barbed end is composed of a CAPZA1:CAPZB heterodimers, which binds ACTR1A/ACTB filament and dynactin and stabilizes dynactin. Interacts with BICD2 and CEP135. Interacts with DYNAP. Interacts with ECPAS. Interacts with MAPRE1.

It localises to the cytoplasm. It is found in the cytoskeleton. The protein resides in the microtubule organizing center. Its subcellular location is the centrosome. The protein localises to the membrane. Functionally, part of the dynactin complex that activates the molecular motor dynein for ultra-processive transport along microtubules. In the dynactin soulder domain, binds the ACTR1A filament and acts as a molecular ruler to determine the length. Modulates cytoplasmic dynein binding to an organelle, and plays a role in prometaphase chromosome alignment and spindle organization during mitosis. Involved in anchoring microtubules to centrosomes. May play a role in synapse formation during brain development. This is Dynactin subunit 2 from Homo sapiens (Human).